Reading from the N-terminus, the 101-residue chain is Small ribosomal subunit protein uS14 (101 aa).

This sequence belongs to the universal ribosomal protein uS14 family. In terms of assembly, part of the 30S ribosomal subunit. Contacts proteins S3 and S10.

Functionally, binds 16S rRNA, required for the assembly of 30S particles and may also be responsible for determining the conformation of the 16S rRNA at the A site. This chain is Small ribosomal subunit protein uS14, found in Vibrio campbellii (strain ATCC BAA-1116).